The chain runs to 338 residues: Putative acyl-[acyl-carrier-protein] desaturase DesA1 (338 aa).

6 residues coordinate Fe cation: glutamate 76, glutamate 107, histidine 110, glutamate 167, glutamate 197, and histidine 200. Residues 314-328 show a composition bias toward basic and acidic residues; the sequence is EARTGKKVSAHELHK. The interval 314 to 338 is disordered; the sequence is EARTGKKVSAHELHKTAGKLAMSRR.

It belongs to the fatty acid desaturase type 2 family. In terms of assembly, homodimer. Fe(2+) is required as a cofactor.

The protein resides in the cell surface. It participates in lipid metabolism; fatty acid metabolism. May be a desaturase involved in mycobacterial fatty acid biosynthesis. The chain is Putative acyl-[acyl-carrier-protein] desaturase DesA1 (desA1) from Mycobacterium tuberculosis (strain CDC 1551 / Oshkosh).